A 224-amino-acid chain; its full sequence is tRNA (guanine-N(7)-)-methyltransferase (224 aa).

3 residues coordinate S-adenosyl-L-methionine: glutamate 52, aspartate 77, and aspartate 126. The active site involves aspartate 126. 2 residues coordinate substrate: lysine 130 and aspartate 162.

The protein belongs to the class I-like SAM-binding methyltransferase superfamily. TrmB family.

The catalysed reaction is guanosine(46) in tRNA + S-adenosyl-L-methionine = N(7)-methylguanosine(46) in tRNA + S-adenosyl-L-homocysteine. The protein operates within tRNA modification; N(7)-methylguanine-tRNA biosynthesis. Its function is as follows. Catalyzes the formation of N(7)-methylguanine at position 46 (m7G46) in tRNA. The polypeptide is tRNA (guanine-N(7)-)-methyltransferase (Christiangramia forsetii (strain DSM 17595 / CGMCC 1.15422 / KT0803) (Gramella forsetii)).